A 435-amino-acid polypeptide reads, in one-letter code: Aspartate--tRNA(Asp/Asn) ligase (435 aa).

E163 serves as a coordination point for L-aspartate. An aspartate region spans residues 185–188; it reads QLYK. R206 contacts L-aspartate. ATP contacts are provided by residues 206–208, 214–216, and E358; these read RAE and RHL. S361 and R365 together coordinate L-aspartate. An ATP-binding site is contributed by 406–409; it reads GAER.

This sequence belongs to the class-II aminoacyl-tRNA synthetase family. Type 2 subfamily. Homodimer.

The protein resides in the cytoplasm. The catalysed reaction is tRNA(Asx) + L-aspartate + ATP = L-aspartyl-tRNA(Asx) + AMP + diphosphate. Aspartyl-tRNA synthetase with relaxed tRNA specificity since it is able to aspartylate not only its cognate tRNA(Asp) but also tRNA(Asn). Reaction proceeds in two steps: L-aspartate is first activated by ATP to form Asp-AMP and then transferred to the acceptor end of tRNA(Asp/Asn). Is slightly more efficient at aminoacylating tRNA(Asn) over tRNA(Asp). The chain is Aspartate--tRNA(Asp/Asn) ligase (aspS2) from Deinococcus radiodurans (strain ATCC 13939 / DSM 20539 / JCM 16871 / CCUG 27074 / LMG 4051 / NBRC 15346 / NCIMB 9279 / VKM B-1422 / R1).